The chain runs to 242 residues: ATP-dependent dethiobiotin synthetase BioD (242 aa).

12–17 contacts ATP; sequence SVGKTI. A Mg(2+)-binding site is contributed by T16. K37 is an active-site residue. D66 is a binding site for ATP. Residues D66 and E124 each coordinate Mg(2+). 184–185 is an ATP binding site; sequence NR.

It belongs to the dethiobiotin synthetase family. As to quaternary structure, homodimer. It depends on Mg(2+) as a cofactor.

The protein resides in the cytoplasm. The catalysed reaction is (7R,8S)-7,8-diammoniononanoate + CO2 + ATP = (4R,5S)-dethiobiotin + ADP + phosphate + 3 H(+). The protein operates within cofactor biosynthesis; biotin biosynthesis; biotin from 7,8-diaminononanoate: step 1/2. In terms of biological role, catalyzes a mechanistically unusual reaction, the ATP-dependent insertion of CO2 between the N7 and N8 nitrogen atoms of 7,8-diaminopelargonic acid (DAPA, also called 7,8-diammoniononanoate) to form a ureido ring. The polypeptide is ATP-dependent dethiobiotin synthetase BioD (Mannheimia succiniciproducens (strain KCTC 0769BP / MBEL55E)).